An 831-amino-acid polypeptide reads, in one-letter code: Histone acetyltransferase SAS3 (831 aa).

One can recognise an MYST-type HAT domain in the interval 267–573 (VWFSQIEYIV…VKYDKLLWEP (307 aa)). The C2HC MYST-type zinc finger occupies 300 to 325 (VFICEFCLKYMTSRYTFYRHQLKCLT). N6-acetyllysine; by autocatalysis is present on Lys-367. Residues 419-421 (ILT) and 426-432 (QRKGYGQ) contribute to the acetyl-CoA site. Residue Glu-452 is the Proton donor/acceptor of the active site. Ser-456 contacts acetyl-CoA. 2 disordered regions span residues 614-639 (ENYN…KTSK) and 719-813 (PLGN…SHIR). The segment covering 621–633 (AHNKRRRRRRRSS) has biased composition (basic residues). 2 stretches are compositionally biased toward acidic residues: residues 736 to 746 (EQDEVENDVDT) and 755 to 794 (KEDE…DDDE). The segment covering 795-812 (DGKRKGQEQDENDIESHI) has biased composition (basic and acidic residues).

The protein belongs to the MYST (SAS/MOZ) family. As to quaternary structure, component of the NuA3 histone acetyltransferase (HAT) complex. The NuA3 HAT complex has 2 functionally distinct forms that participate in transcription. The NuA3a HAT complex is composed of at least NTO1, SAS3, TAF14, YNG1 and EAF6. The NuA3b HAT complex contains an additional subunit, PDP3. SAS3 interacts with CDC68/SPT16. Post-translationally, autoacetylation at Lys-367 is required for proper function.

The protein localises to the nucleus. The catalysed reaction is L-lysyl-[protein] + acetyl-CoA = N(6)-acetyl-L-lysyl-[protein] + CoA + H(+). Catalytic component of the NuA3 histone acetyltransferase complex, that acetylates H3K14. The NuA3 HAT complex has 2 functionally distinct forms. NuA3a binds H3K4me3, through the PHD finger of YNG1, and acetylates H3K14 at the promoter region of actively transcribed genes to promote transcription initiation. NuA3b binds H3K36me3 at the coding regions of actively transcribed genes, through the PWWP domain of PDP3, and coordinates transcription elongation. In vitro, SAS3 acetylates free histones H3 and H4. It is involved in silencing the HMR locus. This Saccharomyces cerevisiae (strain ATCC 204508 / S288c) (Baker's yeast) protein is Histone acetyltransferase SAS3.